Here is a 197-residue protein sequence, read N- to C-terminus: MKLLEDRIHSDGQVLGQDILKVDRFLTHQVDYQLMKEIGKRFAQVYADAEVTKVVTIEASGIAPALYAAESLNVPMIFAKKAKNVTMNDDLLITEVYSFTKKLTSTVQISSKLIEEGDKVLIIDDFLANGQAALGLVHLMEQAKAEVVGLGMVIEKSFQDGRQKLLDQGMKLTSIARIEKFEDGKVIFAPADDIAFD.

Xanthine contacts are provided by Leu20 and Thr27. 128 to 132 contributes to the 5-phospho-alpha-D-ribose 1-diphosphate binding site; the sequence is ANGQA. Residue Lys156 participates in xanthine binding.

The protein belongs to the purine/pyrimidine phosphoribosyltransferase family. Xpt subfamily. In terms of assembly, homodimer.

Its subcellular location is the cytoplasm. It carries out the reaction XMP + diphosphate = xanthine + 5-phospho-alpha-D-ribose 1-diphosphate. Its pathway is purine metabolism; XMP biosynthesis via salvage pathway; XMP from xanthine: step 1/1. Converts the preformed base xanthine, a product of nucleic acid breakdown, to xanthosine 5'-monophosphate (XMP), so it can be reused for RNA or DNA synthesis. This chain is Xanthine phosphoribosyltransferase, found in Lactococcus lactis subsp. cremoris (strain SK11).